The sequence spans 325 residues: Tagatose 1,6-diphosphate aldolase 1 (325 aa).

It belongs to the aldolase LacD family.

The catalysed reaction is D-tagatofuranose 1,6-bisphosphate = D-glyceraldehyde 3-phosphate + dihydroxyacetone phosphate. The protein operates within carbohydrate metabolism; D-tagatose 6-phosphate degradation; D-glyceraldehyde 3-phosphate and glycerone phosphate from D-tagatose 6-phosphate: step 2/2. This chain is Tagatose 1,6-diphosphate aldolase 1 (lacD1), found in Streptococcus mutans serotype c (strain ATCC 700610 / UA159).